A 477-amino-acid chain; its full sequence is Putative WAS protein family homolog 4 (477 aa).

The tract at residues 1 to 180 is WHD1; it reads MSGVMCLKAS…EGLGGLPSNI (180 aa). Disordered regions lie at residues 310–420 and 434–477; these read QDGV…QGGH and KGIS…DWES. Positions 315–327 are enriched in pro residues; that stretch reads TPPPPPPPPPPAP. The interval 362 to 477 is VCA; it reads QGAPREVVDP…QAEDEDDWES (116 aa). A WH2 domain is found at 374–396; the sequence is GWATLLESIRQAGGIGKAKLRSM. The segment covering 395–411 has biased composition (basic and acidic residues); sequence SMKERKLEKQQQKEQEQ. Residues 437-449 show a composition bias toward gly residues; it reads SGKGPGAGDGPGG.

The protein belongs to the WASH1 family. As to quaternary structure, interacts (via WHD1 region) with WASHC2C; the interaction is direct.

It is found in the early endosome membrane. The protein resides in the recycling endosome membrane. May act as a nucleation-promoting factor at the surface of endosomes, where it recruits and activates the Arp2/3 complex to induce actin polymerization, playing a key role in the fission of tubules that serve as transport intermediates during endosome sorting. The protein is Putative WAS protein family homolog 4 (WASH4P) of Homo sapiens (Human).